Reading from the N-terminus, the 277-residue chain is Large ribosomal subunit protein uL2 (277 aa).

The segment at 215-263 is disordered; the sequence is LGRKPHQRGSAMNPVDHPHGGGEGRTGAGRVPVSPWGQPAKGLKTRKKR.

This sequence belongs to the universal ribosomal protein uL2 family. As to quaternary structure, part of the 50S ribosomal subunit. Forms a bridge to the 30S subunit in the 70S ribosome.

One of the primary rRNA binding proteins. Required for association of the 30S and 50S subunits to form the 70S ribosome, for tRNA binding and peptide bond formation. It has been suggested to have peptidyltransferase activity; this is somewhat controversial. Makes several contacts with the 16S rRNA in the 70S ribosome. The polypeptide is Large ribosomal subunit protein uL2 (Deinococcus geothermalis (strain DSM 11300 / CIP 105573 / AG-3a)).